Consider the following 380-residue polypeptide: Endo-polygalacturonase (380 aa).

The signal sequence occupies residues 1–17; the sequence is MVHILSSALSLLRLGAA. Residues 18 to 42 constitute a propeptide that is removed on maturation; that stretch reads VSAAPAPAPTAAPNVADALAAVEKR. An intrachain disulfide couples cysteine 46 to cysteine 64. PbH1 repeat units lie at residues 178–207, 208–229, 230–250, 259–280, 288–310, and 322–343; these read ASGL…DVGS, STDI…AINS, GTGI…SIGS, VSDV…RIKT, VSGV…VIEQ, and TSGV…SSSA. Catalysis depends on aspartate 222, which acts as the Proton donor. A disulfide bond links cysteine 224 and cysteine 240. Residue histidine 244 is part of the active site. A disulfide bridge connects residues cysteine 350 and cysteine 353. An N-linked (GlcNAc...) asparagine glycan is attached at asparagine 361. The cysteines at positions 371 and 380 are disulfide-linked.

Belongs to the glycosyl hydrolase 28 family.

The protein localises to the secreted. It catalyses the reaction (1,4-alpha-D-galacturonosyl)n+m + H2O = (1,4-alpha-D-galacturonosyl)n + (1,4-alpha-D-galacturonosyl)m.. This chain is Endo-polygalacturonase (PG1), found in Sclerotinia sclerotiorum (White mold).